We begin with the raw amino-acid sequence, 242 residues long: Biosynthetic peptidoglycan transglycosylase (242 aa).

The helical transmembrane segment at 19-39 (LMVVLAVFWGGGIALFSVAPV) threads the bilayer.

It belongs to the glycosyltransferase 51 family.

It localises to the cell inner membrane. It catalyses the reaction [GlcNAc-(1-&gt;4)-Mur2Ac(oyl-L-Ala-gamma-D-Glu-L-Lys-D-Ala-D-Ala)](n)-di-trans,octa-cis-undecaprenyl diphosphate + beta-D-GlcNAc-(1-&gt;4)-Mur2Ac(oyl-L-Ala-gamma-D-Glu-L-Lys-D-Ala-D-Ala)-di-trans,octa-cis-undecaprenyl diphosphate = [GlcNAc-(1-&gt;4)-Mur2Ac(oyl-L-Ala-gamma-D-Glu-L-Lys-D-Ala-D-Ala)](n+1)-di-trans,octa-cis-undecaprenyl diphosphate + di-trans,octa-cis-undecaprenyl diphosphate + H(+). It functions in the pathway cell wall biogenesis; peptidoglycan biosynthesis. In terms of biological role, peptidoglycan polymerase that catalyzes glycan chain elongation from lipid-linked precursors. In Shigella dysenteriae serotype 1 (strain Sd197), this protein is Biosynthetic peptidoglycan transglycosylase.